The chain runs to 573 residues: MTQGPGGRAAPEPEAPTTFCALLPRMPQWKFAAPGSFLGRGPAATRVAGVAEAQPEPGVPALAAVLGACEPRCAAPCPLPALGRCRGSGTRGARVTPDVADEWVRKGGFIHKPAHGWLHPDARVLGPGVSYIVRYMGCIEVLRSMRSLDFNTRTQVTREAINRLHEAVPGVRGSWKKKAPNKALASILGKSNLRFAGMSISVNISVDGLNLSVPATRQIIANHHMQSISFASGGDTDMTDYVAYVAKDPINQRACHILECCEGLAQSVISTVGQAFELRFKQYLHSPPKAVVPPERLTGLEELAWGDDDAAADHNYYNSIPGKEPPLGGLVDSRLAVTQPCALATLGGLGQGMTPVWRDARGLPWDMGPSGAAPPGDGYVQADARGPHDYEEHLYVNTQGLDAVELEDTAEAPLQFEDSPKKDLFDMRPFEDALKLHACSVAAGITAASPPLEDQWPSPPTRRAPIAPTEEQLRQEPWYHGRMSRRAAEKLLRADGDFLVRDSVTNPGQYVLTGMHAGQPKHLLLVDPEGVVRTKDVLFESISHLIDYHLKNGLPIVAAESELHLRGVVSREP.

Positions 125–309 (LGPGVSYIVR…LEELAWGDDD (185 aa)) constitute a PID domain. The interval 310–477 (AAADHNYYNS…PTEEQLRQEP (168 aa)) is CH1. 3 positions are modified to phosphotyrosine: Y316, Y317, and Y395. The 92-residue stretch at 478 to 569 (WYHGRMSRRA…ESELHLRGVV (92 aa)) folds into the SH2 domain.

As to quaternary structure, interacts with the Trk receptors in a phosphotyrosine-dependent manner and MEGF12. Once activated, binds to GRB2. In terms of processing, phosphorylated on tyrosine by the Trk receptors. In terms of tissue distribution, expressed in brain. Expressed at high level in the hypothalamus and at low level in the caudate nucleus.

Its function is as follows. Signaling adapter that couples activated growth factor receptors to signaling pathway in neurons. Involved in the signal transduction pathways of neurotrophin-activated Trk receptors in cortical neurons. The sequence is that of SHC-transforming protein 2 (Shc2) from Mus musculus (Mouse).